A 144-amino-acid polypeptide reads, in one-letter code: Large ribosomal subunit protein uL16 (144 aa).

It belongs to the universal ribosomal protein uL16 family. Part of the 50S ribosomal subunit.

Binds 23S rRNA and is also seen to make contacts with the A and possibly P site tRNAs. The protein is Large ribosomal subunit protein uL16 of Bacillus pumilus (strain SAFR-032).